A 373-amino-acid polypeptide reads, in one-letter code: 3-dehydroquinate synthase (373 aa).

NAD(+) is bound by residues 107 to 111, 131 to 132, K144, and K153; these read GVIGD and TS. Zn(2+)-binding residues include E186, H249, and H267.

This sequence belongs to the sugar phosphate cyclases superfamily. Dehydroquinate synthase family. Requires Co(2+) as cofactor. The cofactor is Zn(2+). It depends on NAD(+) as a cofactor.

It is found in the cytoplasm. It catalyses the reaction 7-phospho-2-dehydro-3-deoxy-D-arabino-heptonate = 3-dehydroquinate + phosphate. It participates in metabolic intermediate biosynthesis; chorismate biosynthesis; chorismate from D-erythrose 4-phosphate and phosphoenolpyruvate: step 2/7. Catalyzes the conversion of 3-deoxy-D-arabino-heptulosonate 7-phosphate (DAHP) to dehydroquinate (DHQ). The protein is 3-dehydroquinate synthase of Ruegeria sp. (strain TM1040) (Silicibacter sp.).